The chain runs to 209 residues: MRKGILGKKIGMTQVFDETGRAIPVTVIQAGPCVVIRKKETSTDGYDAVQVGFEPVKERKVNKPLLGYFNKAGVTPFRYIREFRLENSGEYQVGQEIKADVFSPGEKVDVTGISKGKGFAGGIKRHGFHRGPMEHGSKYHRRPGSLAAKGPARVFKGRRLPGHLGAVRVTVQGLEVVRNDPERNLLLIKGSVPGPRHGLLVIKNSVKGG.

It belongs to the universal ribosomal protein uL3 family. Part of the 50S ribosomal subunit. Forms a cluster with proteins L14 and L19.

Functionally, one of the primary rRNA binding proteins, it binds directly near the 3'-end of the 23S rRNA, where it nucleates assembly of the 50S subunit. This Moorella thermoacetica (strain ATCC 39073 / JCM 9320) protein is Large ribosomal subunit protein uL3.